A 268-amino-acid chain; its full sequence is Undecaprenyl-diphosphatase (268 aa).

Helical transmembrane passes span 9–29 (VILG…TGHL), 47–67 (FDVL…FAKL), 83–103 (FIIG…AAGS), 107–127 (LFLF…AVLL), 144–164 (FPVL…IPGV), 184–204 (AAEF…VYDL), 218–238 (IVAV…KTFL), and 246–266 (FQLF…ALAM).

This sequence belongs to the UppP family.

It is found in the cell inner membrane. The enzyme catalyses di-trans,octa-cis-undecaprenyl diphosphate + H2O = di-trans,octa-cis-undecaprenyl phosphate + phosphate + H(+). Its function is as follows. Catalyzes the dephosphorylation of undecaprenyl diphosphate (UPP). Confers resistance to bacitracin. The protein is Undecaprenyl-diphosphatase of Rhodopseudomonas palustris (strain HaA2).